Here is a 149-residue protein sequence, read N- to C-terminus: Small ribosomal subunit protein uS13 (149 aa).

It belongs to the universal ribosomal protein uS13 family. Part of the 30S ribosomal subunit. Forms a loose heterodimer with protein S19. Forms two bridges to the 50S subunit in the 70S ribosome.

Functionally, located at the top of the head of the 30S subunit, it contacts several helices of the 16S rRNA. In the 70S ribosome it contacts the 23S rRNA (bridge B1a) and protein L5 of the 50S subunit (bridge B1b), connecting the 2 subunits; these bridges are implicated in subunit movement. This chain is Small ribosomal subunit protein uS13, found in Methanococcus maripaludis (strain DSM 14266 / JCM 13030 / NBRC 101832 / S2 / LL).